The following is a 420-amino-acid chain: Enolase (420 aa).

Gln162 serves as a coordination point for (2R)-2-phosphoglycerate. The Proton donor role is filled by Glu206. 3 residues coordinate Mg(2+): Asp241, Glu282, and Asp308. 4 residues coordinate (2R)-2-phosphoglycerate: Lys333, Arg362, Ser363, and Lys384. Lys333 (proton acceptor) is an active-site residue.

It belongs to the enolase family. Mg(2+) serves as cofactor.

It is found in the cytoplasm. It localises to the secreted. Its subcellular location is the cell surface. It carries out the reaction (2R)-2-phosphoglycerate = phosphoenolpyruvate + H2O. It participates in carbohydrate degradation; glycolysis; pyruvate from D-glyceraldehyde 3-phosphate: step 4/5. Its function is as follows. Catalyzes the reversible conversion of 2-phosphoglycerate (2-PG) into phosphoenolpyruvate (PEP). It is essential for the degradation of carbohydrates via glycolysis. This is Enolase from Methanothrix thermoacetophila (strain DSM 6194 / JCM 14653 / NBRC 101360 / PT) (Methanosaeta thermophila).